Consider the following 511-residue polypeptide: 2,3-bisphosphoglycerate-independent phosphoglycerate mutase (511 aa).

Mn(2+) is bound by residues Asp-12 and Ser-62. The active-site Phosphoserine intermediate is the Ser-62. Substrate contacts are provided by residues His-123, 153–154 (RD), Arg-185, Arg-191, 260–263 (RPDR), and Lys-333. Mn(2+)-binding residues include Asp-400, His-404, Asp-441, His-442, and His-460.

This sequence belongs to the BPG-independent phosphoglycerate mutase family. As to quaternary structure, monomer. It depends on Mn(2+) as a cofactor.

The catalysed reaction is (2R)-2-phosphoglycerate = (2R)-3-phosphoglycerate. It functions in the pathway carbohydrate degradation; glycolysis; pyruvate from D-glyceraldehyde 3-phosphate: step 3/5. Catalyzes the interconversion of 2-phosphoglycerate and 3-phosphoglycerate. In Clostridium novyi (strain NT), this protein is 2,3-bisphosphoglycerate-independent phosphoglycerate mutase.